The sequence spans 311 residues: Succinate dehydrogenase [ubiquinone] iron-sulfur subunit 2, mitochondrial (311 aa).

Residues 1–63 constitute a mitochondrion transit peptide; the sequence is MILRRTLPRL…EEIRDHRRGD (63 aa). The interval 1-70 is disordered; it reads MILRRTLPRL…RGDAAAASPA (70 aa). Basic and acidic residues predominate over residues 51–63; that stretch reads AKEEEIRDHRRGD. Residues 77–168 form the 2Fe-2S ferredoxin-type domain; sequence FRVYRWSPDA…ATTVTPLPHM (92 aa). [2Fe-2S] cluster contacts are provided by cysteine 128, cysteine 133, and cysteine 148. The 31-residue stretch at 211-241 folds into the 4Fe-4S ferredoxin-type domain; that stretch reads ERKRLDGLYECILCACCSAACPSYWWNAEAF. Residues cysteine 221, cysteine 224, and cysteine 227 each contribute to the [4Fe-4S] cluster site. Residue cysteine 231 coordinates [3Fe-4S] cluster. An a ubiquinone-binding site is contributed by tryptophan 236. [3Fe-4S] cluster-binding residues include cysteine 279 and cysteine 285. Position 289 (cysteine 289) interacts with [4Fe-4S] cluster.

This sequence belongs to the succinate dehydrogenase/fumarate reductase iron-sulfur protein family. Component of complex II composed of eight subunits in plants: four classical SDH subunits SDH1, SDH2, SDH3 and SDH4 (a flavoprotein (FP), an iron-sulfur protein (IP), and a cytochrome b composed of a large and a small subunit.), as well as four subunits unknown in mitochondria from bacteria and heterotrophic eukaryotes. [2Fe-2S] cluster is required as a cofactor. Requires [3Fe-4S] cluster as cofactor. It depends on [4Fe-4S] cluster as a cofactor.

The protein localises to the mitochondrion inner membrane. It catalyses the reaction a quinone + succinate = fumarate + a quinol. The protein operates within carbohydrate metabolism; tricarboxylic acid cycle; fumarate from succinate (eukaryal route): step 1/1. Iron-sulfur protein (IP) subunit of succinate dehydrogenase (SDH) that is involved in complex II of the mitochondrial electron transport chain and is responsible for transferring electrons from succinate to ubiquinone (coenzyme Q). The protein is Succinate dehydrogenase [ubiquinone] iron-sulfur subunit 2, mitochondrial of Oryza sativa subsp. japonica (Rice).